A 654-amino-acid polypeptide reads, in one-letter code: MSESPAQEARTRTALVLYGSETGNAQEVAEELGALAERLHFVTHVAEMNSVKATLLTILPQEMLRSFTFTIFVVSTTGQGEIPANARSFWRSLLLKKLPPTFLSGVNYVSFGLGDSSYPKFNWAARKLHKRLLQLGANEIYPRGEANAQHPEGLEGTFIPWITDFRSHLLDKYPLPEGLHPIPDDEQLPPKWVLRLQEPATTGDELTEGTLSSEQTVSDEYPGLTRLDHDVRPIPDALTATLVENRRVTPRTHWQDVRQISLTVPDAVTYAPGDMICITPKNFDEDVQALIDMMGWGEMADKLVSLAPGEKLQAAGELHAPPIPGLEKYPKLTLRALLMDYIDIRAIPRRSFFSAIAHYTSNEMHKERLLEFTNPEYLDEFWDYTSRPRRSILEVLHEFHSVKIPWQHVTTVFPVFRGRQFSIASGGELKRTSGGGAKFELLIAIVKYQTVIKRIREGVCTRYLSVLRPGSTLKVQLQRGGLSSSVNQLVGPTVLIGPGTGVAPLRSMLWEKAAFVKAYREEHPDANPPIGPTILLYGGRNRAADFFFEEEWQELSDLIGLQVFTAFSRDQRHKIYVQDIIRRNFGLFFRLLHDMNGSVYICGSSGRMPQAVREALIEAFEHGGQADGPQLARRGAEEYLIGMEKSGRYKQETW.

The Flavodoxin-like domain maps to 14–166 (ALVLYGSETG…TFIPWITDFR (153 aa)). FMN contacts are provided by residues 20 to 25 (SETGNA), 75 to 78 (STTG), and 113 to 122 (LGDSSYPKFN). One can recognise an FAD-binding FR-type domain in the interval 235 to 485 (PDALTATLVE…QLQRGGLSSS (251 aa)). FAD is bound by residues Arg-389, 419-422 (RQFS), and 458-461 (GVCT). NADP(+) is bound by residues Thr-500, 568–569 (SR), and 574–578 (KIYVQ). Position 654 (Trp-654) interacts with FAD.

Belongs to the NADPH-dependent diflavin oxidoreductase NDOR1 family. This sequence in the N-terminal section; belongs to the flavodoxin family. The protein in the C-terminal section; belongs to the flavoprotein pyridine nucleotide cytochrome reductase family. Interacts with dre2; as part of the cytosolic iron-sulfur (Fe-S) protein assembly (CIA) machinery. Requires FAD as cofactor. It depends on FMN as a cofactor.

The protein resides in the cytoplasm. It is found in the mitochondrion. It carries out the reaction 2 oxidized [2Fe-2S]-[protein] + NADPH = 2 reduced [2Fe-2S]-[protein] + NADP(+) + H(+). Its function is as follows. NADPH-dependent reductase which is a central component of the cytosolic iron-sulfur (Fe-S) protein assembly (CIA) machinery. Transfers electrons from NADPH via its FAD and FMN prosthetic groups to the [2Fe-2S] cluster of dre2, another key component of the CIA machinery. In turn, this reduced cluster provides electrons for assembly of cytosolic iron-sulfur cluster proteins. Positively controls H(2)O(2)-induced cell death. The protein is NADPH-dependent diflavin oxidoreductase 1 of Aspergillus fumigatus (strain ATCC MYA-4609 / CBS 101355 / FGSC A1100 / Af293) (Neosartorya fumigata).